A 250-amino-acid polypeptide reads, in one-letter code: 5'/3'-nucleotidase SurE (250 aa).

4 residues coordinate a divalent metal cation: aspartate 8, aspartate 9, serine 39, and asparagine 92.

This sequence belongs to the SurE nucleotidase family. Requires a divalent metal cation as cofactor.

The protein resides in the cytoplasm. It carries out the reaction a ribonucleoside 5'-phosphate + H2O = a ribonucleoside + phosphate. It catalyses the reaction a ribonucleoside 3'-phosphate + H2O = a ribonucleoside + phosphate. The catalysed reaction is [phosphate](n) + H2O = [phosphate](n-1) + phosphate + H(+). Functionally, nucleotidase with a broad substrate specificity as it can dephosphorylate various ribo- and deoxyribonucleoside 5'-monophosphates and ribonucleoside 3'-monophosphates with highest affinity to 3'-AMP. Also hydrolyzes polyphosphate (exopolyphosphatase activity) with the preference for short-chain-length substrates (P20-25). Might be involved in the regulation of dNTP and NTP pools, and in the turnover of 3'-mononucleotides produced by numerous intracellular RNases (T1, T2, and F) during the degradation of various RNAs. This is 5'/3'-nucleotidase SurE from Wigglesworthia glossinidia brevipalpis.